The primary structure comprises 203 residues: Protein GrpE (203 aa).

Positions 1–20 (MSDNGDNNTKSPQHNNPQPN) are enriched in polar residues. Residues 1-46 (MSDNGDNNTKSPQHNNPQPNEKSDGKVQPGQPQVNPQRKFTAGINK) are disordered.

This sequence belongs to the GrpE family. As to quaternary structure, homodimer.

The protein localises to the cytoplasm. Functionally, participates actively in the response to hyperosmotic and heat shock by preventing the aggregation of stress-denatured proteins, in association with DnaK and GrpE. It is the nucleotide exchange factor for DnaK and may function as a thermosensor. Unfolded proteins bind initially to DnaJ; upon interaction with the DnaJ-bound protein, DnaK hydrolyzes its bound ATP, resulting in the formation of a stable complex. GrpE releases ADP from DnaK; ATP binding to DnaK triggers the release of the substrate protein, thus completing the reaction cycle. Several rounds of ATP-dependent interactions between DnaJ, DnaK and GrpE are required for fully efficient folding. This is Protein GrpE from Ehrlichia chaffeensis (strain ATCC CRL-10679 / Arkansas).